Consider the following 533-residue polypeptide: Sterol 26-hydroxylase, mitochondrial (533 aa).

A mitochondrion-targeting transit peptide spans 1–32; that stretch reads MAAWSRTRLRWTLLDPRVVGRGLCPQGARAKA. The disordered stretch occupies residues 34-60; sequence IPAALQAQESTEGPGTGQDRPRLRSPA. K142, K232, K285, K296, and K375 each carry N6-acetyllysine. The sterol-binding stretch occupies residues 386-400; the sequence is PLLKAVIKETLRLYP. C479 contacts heme. K512 and K523 each carry N6-acetyllysine.

The protein belongs to the cytochrome P450 family. As to quaternary structure, interacts with HSP70; this interaction is required for initial targeting to mitochondria. The cofactor is heme. Post-translationally, acetylation of Lys-125 and Lys-285 is observed in liver mitochondria from fasted mice but not from fed mice. Expressed in the gray and white matter of cerebellum (at protein level).

The protein resides in the mitochondrion inner membrane. The enzyme catalyses 5beta-cholestane-3alpha,7alpha,12alpha-triol + 6 reduced [adrenodoxin] + 3 O2 + 5 H(+) = (25R)-3alpha,7alpha,12alpha-trihydroxy-5beta-cholestan-26-oate + 6 oxidized [adrenodoxin] + 4 H2O. It carries out the reaction cholestanol + 2 reduced [adrenodoxin] + O2 + 2 H(+) = (25R)-26-hydroxycholestanol + 2 oxidized [adrenodoxin] + H2O. It catalyses the reaction (25R)-3beta-hydroxycholest-5-en-7-one-26-al + 2 reduced [adrenodoxin] + O2 + H(+) = (25R)-3beta-hydroxycholest-5-en-7-one-26-oate + 2 oxidized [adrenodoxin] + H2O. The catalysed reaction is (25R)-3beta,26-dihydroxycholest-5-en-7-one + 2 reduced [adrenodoxin] + O2 + 2 H(+) = (25R)-3beta-hydroxycholest-5-en-7-one-26-al + 2 oxidized [adrenodoxin] + 2 H2O. The enzyme catalyses 7-oxocholesterol + 2 reduced [adrenodoxin] + O2 + 2 H(+) = (25R)-3beta,26-dihydroxycholest-5-en-7-one + 2 oxidized [adrenodoxin] + H2O. It carries out the reaction calciol + 2 reduced [adrenodoxin] + O2 + 2 H(+) = calcidiol + 2 oxidized [adrenodoxin] + H2O. It catalyses the reaction (25R)-5beta-cholestane-3alpha,7alpha,12alpha,26-tetrol + 2 reduced [adrenodoxin] + O2 + 2 H(+) = (25R)-3alpha,7alpha,12alpha-trihydroxy-5beta-cholestan-26-al + 2 oxidized [adrenodoxin] + 2 H2O. The catalysed reaction is 2 reduced [adrenodoxin] + cholesterol + O2 + 2 H(+) = (25R)-cholest-5-ene-3beta,26-diol + 2 oxidized [adrenodoxin] + H2O. The enzyme catalyses (25R)-3beta,4beta-dihydroxycholest-5-en-26-al + 2 reduced [adrenodoxin] + O2 + H(+) = (25R)-3beta,4beta-dihydroxycholest-5-en-26-oate + 2 oxidized [adrenodoxin] + H2O. It carries out the reaction (25R)-4beta,26-dihydroxycholesterol + 2 reduced [adrenodoxin] + O2 + 2 H(+) = (25R)-3beta,4beta-dihydroxycholest-5-en-26-al + 2 oxidized [adrenodoxin] + 2 H2O. It catalyses the reaction 4beta-hydroxycholesterol + 2 reduced [adrenodoxin] + O2 + 2 H(+) = (25R)-4beta,26-dihydroxycholesterol + 2 oxidized [adrenodoxin] + H2O. The catalysed reaction is (25R)-3beta-hydroxy-5-cholesten-26-al + 2 reduced [adrenodoxin] + O2 + H(+) = (25R)-3beta-hydroxy-5-cholestenoate + 2 oxidized [adrenodoxin] + H2O. The enzyme catalyses (25R)-cholest-5-ene-3beta,26-diol + 2 reduced [adrenodoxin] + O2 + 2 H(+) = (25R)-3beta-hydroxy-5-cholesten-26-al + 2 oxidized [adrenodoxin] + 2 H2O. It carries out the reaction (25R)-3alpha,7alpha,12alpha-trihydroxy-5beta-cholestan-26-al + 2 reduced [adrenodoxin] + O2 + H(+) = (25R)-3alpha,7alpha,12alpha-trihydroxy-5beta-cholestan-26-oate + 2 oxidized [adrenodoxin] + H2O. It catalyses the reaction 5beta-cholestane-3alpha,7alpha,12alpha-triol + 2 reduced [adrenodoxin] + O2 + 2 H(+) = (25R)-5beta-cholestane-3alpha,7alpha,12alpha,26-tetrol + 2 oxidized [adrenodoxin] + H2O. It functions in the pathway hormone biosynthesis; cholecalciferol biosynthesis. Its pathway is steroid metabolism; cholesterol degradation. It participates in lipid metabolism; bile acid biosynthesis. In terms of biological role, cytochrome P450 monooxygenase that catalyzes regio- and stereospecific hydroxylation of cholesterol and its derivatives. Hydroxylates (with R stereochemistry) the terminal methyl group of cholesterol side-chain in a three step reaction to yield at first a C26 alcohol, then a C26 aldehyde and finally a C26 acid. Regulates cholesterol homeostasis by catalyzing the conversion of excess cholesterol to bile acids via both the 'neutral' (classic) and the 'acid' (alternative) pathways. May also regulate cholesterol homeostasis via generation of active oxysterols, which act as ligands for NR1H2 and NR1H3 nuclear receptors, modulating the transcription of genes involved in lipid metabolism. Plays a role in cholestanol metabolism in the cerebellum. Similarly to cholesterol, hydroxylates cholestanol and may facilitate sterol diffusion through the blood-brain barrier to the systemic circulation for further degradation. Also hydroxylates retinal 7-ketocholesterol, a noxious oxysterol with pro-inflammatory and pro-apoptotic effects, and may play a role in its elimination from the retinal pigment epithelium. May play a redundant role in vitamin D biosynthesis. Catalyzes 25-hydroxylation of vitamin D3 that is required for its conversion to a functionally active form. This chain is Sterol 26-hydroxylase, mitochondrial, found in Mus musculus (Mouse).